The chain runs to 1363 residues: Collagen alpha-2(I) chain (1363 aa).

The N-terminal stretch at Met-1–Ser-22 is a signal peptide. Pyrrolidone carboxylic acid is present on Gln-23. The propeptide at Gln-23–Ala-77 is N-terminal propeptide. The disordered stretch occupies residues Ala-28–Gly-1110. A compositionally biased stretch (pro residues) spans Pro-59–Pro-69. Position 78 is a pyrrolidone carboxylic acid (Gln-78). Position 83 is an allysine (Lys-83). Low complexity predominate over residues Gly-88–Pro-97. Residues Arg-98–Pro-110 show a composition bias toward pro residues. The segment covering Phe-112–Gln-128 has biased composition (low complexity). The span at Ala-140–Glu-154 shows a compositional bias: basic and acidic residues. Lys-176 carries the 5-hydroxylysine; alternate modification. O-linked (Gal...) hydroxylysine; alternate glycosylation is present at Lys-176. Composition is skewed to low complexity over residues Ile-224–Lys-263 and Pro-299–Pro-320. Over residues Leu-322–Ala-335 the composition is skewed to pro residues. 4-hydroxyproline is present on residues Pro-440 and Pro-443. Low complexity-rich tracts occupy residues Pro-601–Pro-610 and Arg-674–Pro-683. Residues Gly-684 to Gly-699 are compositionally biased toward gly residues. The span at Pro-721–Ala-736 shows a compositional bias: low complexity. A compositionally biased stretch (basic and acidic residues) spans Lys-737–Lys-746. Low complexity-rich tracts occupy residues Glu-748–Val-794, Ala-842–Pro-875, Val-898–Asn-931, Pro-955–His-965, and Val-986–Arg-995. The span at Arg-1004–His-1015 shows a compositional bias: basic and acidic residues. Positions Gln-1036–Ala-1049 are enriched in low complexity. Pro residues-rich tracts occupy residues Pro-1051–Pro-1060 and Ala-1088–Pro-1102. Residues Ala-1118–Lys-1363 constitute a propeptide, C-terminal propeptide. Residues Tyr-1128–Lys-1363 enclose the Fibrillar collagen NC1 domain. Cystine bridges form between Cys-1158/Cys-1190, Cys-1198/Cys-1361, and Cys-1269/Cys-1314. Ca(2+) contacts are provided by Asp-1176, Asn-1178, Gln-1179, Cys-1181, and Asp-1184. Asn-1264 carries an N-linked (GlcNAc...) asparagine glycan.

The protein belongs to the fibrillar collagen family. In terms of assembly, trimers of one alpha 2(I) and two alpha 1(I) chains. In terms of processing, prolines at the third position of the tripeptide repeating unit (G-X-Y) are hydroxylated in some or all of the chains. Post-translationally, the N-terminus of the mature protein is blocked. In terms of tissue distribution, forms the fibrils of tendon, ligaments and bones. In bones the fibrils are mineralized with calcium hydroxyapatite.

It is found in the secreted. Its subcellular location is the extracellular space. It localises to the extracellular matrix. Its function is as follows. Type I collagen is a member of group I collagen (fibrillar forming collagen). This Gallus gallus (Chicken) protein is Collagen alpha-2(I) chain (COL1A2).